Reading from the N-terminus, the 780-residue chain is Striatin (780 aa).

The stretch at 53-120 (LHFLQHEWAR…QERAKYHKLK (68 aa)) forms a coiled coil. Residues 55–63 (FLQHEWARF) are caveolin-binding. The segment at 124 to 145 (ELNQGDMKPPSYDSDEGNETEV) is disordered. Serine 137 carries the phosphoserine modification. The segment at 149-166 (QNSQFMWKQGRQLLRQYL) is calmodulin-binding. The residue at position 225 (threonine 225) is a Phosphothreonine. Serine 227, serine 229, serine 245, and serine 259 each carry phosphoserine. 3 disordered regions span residues 290 to 321 (FLVA…TPER), 334 to 353 (EQYK…NRSK), and 363 to 388 (DVDE…LPEQ). Residues 299-315 (NESRSAGDGTDWEKEDQ) are compositionally biased toward basic and acidic residues. Positions 338 to 351 (KERKGKKGVKRPNR) are enriched in basic residues. WD repeat units follow at residues 461-500 (SHFD…PAKK), 514-553 (AHKG…VDPY), 567-606 (GHTD…PALT), 662-701 (SSSC…LIHS), 704-743 (AHLE…CIQE), and 750-780 (KFEE…KVFV).

The protein belongs to the WD repeat striatin family. Part of the core of STRIPAK complexes composed of PP2A catalytic and scaffolding subunits, the striatins (PP2A regulatory subunits), the striatin-associated proteins MOB4, STRIP1 and STRIP2, PDCD10 and members of the STE20 kinases, such as STK24 and STK26. Interacts with CTTNBP2; this interaction may regulate dendritic spine distribution of STRN. Activation of glutamate receptors weakens the interaction with CTTNBP2. In terms of tissue distribution, mainly expressed in the central nervous system. Mostly confined in dendrites, not in axons, and is most abundant in dendritic spines.

It localises to the cytoplasm. Its subcellular location is the membrane. The protein resides in the cell projection. The protein localises to the dendritic spine. Calmodulin-binding scaffolding protein which is the center of the striatin-interacting phosphatase and kinase (STRIPAK) complexes. STRIPAK complexes have critical roles in protein (de)phosphorylation and are regulators of multiple signaling pathways including Hippo, MAPK, nuclear receptor and cytoskeleton remodeling. Different types of STRIPAK complexes are involved in a variety of biological processes such as cell growth, differentiation, apoptosis, metabolism and immune regulation. The chain is Striatin (Strn) from Rattus norvegicus (Rat).